We begin with the raw amino-acid sequence, 260 residues long: Deoxyribonuclease-1 (260 aa).

Residue N18 is glycosylated (N-linked (GlcNAc...) asparagine). The active site involves E78. Cysteines 101 and 104 form a disulfide. The active site involves H134. A disulfide bridge connects residues C173 and C209.

It belongs to the DNase I family. It depends on Ca(2+) as a cofactor. Requires Mg(2+) as cofactor.

Its subcellular location is the secreted. The protein localises to the zymogen granule. It is found in the nucleus envelope. It carries out the reaction Endonucleolytic cleavage to 5'-phosphodinucleotide and 5'-phosphooligonucleotide end-products.. Serum endocuclease secreted into body fluids by a wide variety of exocrine and endocrine organs. Expressed by non-hematopoietic tissues and preferentially cleaves protein-free DNA. Among other functions, seems to be involved in cell death by apoptosis. Binds specifically to G-actin and blocks actin polymerization. Together with DNASE1L3, plays a key role in degrading neutrophil extracellular traps (NETs). NETs are mainly composed of DNA fibers and are released by neutrophils to bind pathogens during inflammation. Degradation of intravascular NETs by DNASE1 and DNASE1L3 is required to prevent formation of clots that obstruct blood vessels and cause organ damage following inflammation. The chain is Deoxyribonuclease-1 (DNASE1) from Ovis aries (Sheep).